The following is a 147-amino-acid chain: Lysozyme C (147 aa).

Residues 1–18 form the signal peptide; the sequence is MKFFLILGFCLLPLIAQG. The region spanning 19–147 is the C-type lysozyme domain; the sequence is KVFQRCELAA…VSQWIRGCRV (129 aa). Intrachain disulfides connect Cys24–Cys145, Cys48–Cys133, Cys82–Cys98, and Cys94–Cys112. Catalysis depends on residues Glu53 and Asp70. A substrate-binding site is contributed by Asp119.

Belongs to the glycosyl hydrolase 22 family. In terms of assembly, monomer. In terms of tissue distribution, expressed in liver and ovary. Not expressed in bone marrow, lung, spleen, intestine or oviduct.

The protein resides in the secreted. It carries out the reaction Hydrolysis of (1-&gt;4)-beta-linkages between N-acetylmuramic acid and N-acetyl-D-glucosamine residues in a peptidoglycan and between N-acetyl-D-glucosamine residues in chitodextrins.. Its function is as follows. Lysozymes have primarily a bacteriolytic function; those in tissues and body fluids are associated with the monocyte-macrophage system and enhance the activity of immunoagents. Has bacteriolytic activity against M.luteus. The sequence is that of Lysozyme C from Dromaius novaehollandiae (Emu).